Here is a 457-residue protein sequence, read N- to C-terminus: Argininosuccinate lyase (457 aa).

The protein belongs to the lyase 1 family. Argininosuccinate lyase subfamily.

The protein resides in the cytoplasm. The enzyme catalyses 2-(N(omega)-L-arginino)succinate = fumarate + L-arginine. Its pathway is amino-acid biosynthesis; L-arginine biosynthesis; L-arginine from L-ornithine and carbamoyl phosphate: step 3/3. This chain is Argininosuccinate lyase, found in Serratia proteamaculans (strain 568).